The chain runs to 317 residues: Testis-expressed protein 19.2 (317 aa).

A compositionally biased stretch (acidic residues) spans 64-75 (MELSEASSEPEE). The tract at residues 64–113 (MELSEASSEPEEWPGLSGGEGQGHLPHGISVSAGSGAQGPQPVPTELGPQ) is disordered. An important for interaction with piRNA region spans residues 101–145 (QGPQPVPTELGPQEAVPLDLGPEDAEWTQALPWRFDGLSPCSHWL).

Interacts with UBR2. Interacts with piRNA-associated proteins DDX4, EDC4, MAEL, PIWIL1, PIWIL2, RANBP9 and TDRD6. In terms of tissue distribution, specifically expressed in somatic cells of male gonad lineage.

Its subcellular location is the cytoplasm. Functionally, may be required during spermatogenesis, probably by participating in the repression of retrotransposable elements and prevent their mobilization. With its paralog, Tex19.1, collaborates with the Piwi-interacting RNA (piRNA) pathway, which mediates the repression of transposable elements during meiosis by forming complexes composed of piRNAs and Piwi proteins. Interacts with Piwi proteins and directly binds piRNAs, a class of 24 to 30 nucleotide RNAs that are generated by a Dicer-independent mechanism and are primarily derived from transposons and other repeated sequence elements. This Mus musculus (Mouse) protein is Testis-expressed protein 19.2 (Tex19.2).